We begin with the raw amino-acid sequence, 1206 residues long: DNA polymerase (1206 aa).

The protein belongs to the DNA polymerase type-B family.

It catalyses the reaction DNA(n) + a 2'-deoxyribonucleoside 5'-triphosphate = DNA(n+1) + diphosphate. The polypeptide is DNA polymerase (dpo) (Pyramimonas orientalis virus (PoV01)).